The sequence spans 218 residues: Protein-L-isoaspartate O-methyltransferase (218 aa).

Serine 52 is an active-site residue.

The protein belongs to the methyltransferase superfamily. L-isoaspartyl/D-aspartyl protein methyltransferase family.

The protein localises to the cytoplasm. The enzyme catalyses [protein]-L-isoaspartate + S-adenosyl-L-methionine = [protein]-L-isoaspartate alpha-methyl ester + S-adenosyl-L-homocysteine. Functionally, catalyzes the methyl esterification of L-isoaspartyl residues in peptides and proteins that result from spontaneous decomposition of normal L-aspartyl and L-asparaginyl residues. It plays a role in the repair and/or degradation of damaged proteins. The polypeptide is Protein-L-isoaspartate O-methyltransferase (Rhodopseudomonas palustris (strain ATCC BAA-98 / CGA009)).